The following is a 462-amino-acid chain: Integrator complex subunit 12 (462 aa).

Residues 42–132 (GIDSSYRPSQ…PETQSSPITV (91 aa)) form a disordered region. Residues 59–86 (ISSTKNISIKQEPKISSSLPSGNNNGKV) are compositionally biased toward polar residues. Lys-68 is covalently cross-linked (Glycyl lysine isopeptide (Lys-Gly) (interchain with G-Cter in SUMO2)). Residues 88 to 124 (TTEKVKKEAEKRPADKMKSDITEGVDIPKKPRLEKPE) show a composition bias toward basic and acidic residues. Ser-128 carries the phosphoserine modification. The segment at 159–215 (GLACVVCRQMMVASGNQLVECQECHNLYHRDCHKPQVTDKEANDPRLVWYCARCTRQ) adopts a PHD-type zinc-finger fold. Lys-254 participates in a covalent cross-link: Glycyl lysine isopeptide (Lys-Gly) (interchain with G-Cter in SUMO2). The span at 301–328 (SSAGPSTAKLSSTTQNNTGKPATSSANQ) shows a compositional bias: polar residues. The tract at residues 301–462 (SSAGPSTAKL…KKAAQKKLKK (162 aa)) is disordered. 2 stretches are compositionally biased toward low complexity: residues 347-358 (KIGSNNSTTPTV) and 382-437 (VSKV…GPTS). A compositionally biased stretch (basic residues) spans 449–462 (QMVKKKAAQKKLKK).

It belongs to the Integrator subunit 12 family. Component of the Integrator complex, composed of core subunits INTS1, INTS2, INTS3, INTS4, INTS5, INTS6, INTS7, INTS8, INTS9/RC74, INTS10, INTS11/CPSF3L, INTS12, INTS13, INTS14 and INTS15. The core complex associates with protein phosphatase 2A subunits PPP2CA and PPP2R1A, to form the Integrator-PP2A (INTAC) complex. In terms of processing, dephosphorylated at Ser-128 by the PNUTS-PP1 complex, promoting RNA polymerase II transcription pause-release.

The protein localises to the nucleus. Its function is as follows. Component of the integrator complex, a multiprotein complex that terminates RNA polymerase II (Pol II) transcription in the promoter-proximal region of genes. The integrator complex provides a quality checkpoint during transcription elongation by driving premature transcription termination of transcripts that are unfavorably configured for transcriptional elongation: the complex terminates transcription by (1) catalyzing dephosphorylation of the C-terminal domain (CTD) of Pol II subunit POLR2A/RPB1 and SUPT5H/SPT5, (2) degrading the exiting nascent RNA transcript via endonuclease activity and (3) promoting the release of Pol II from bound DNA. The integrator complex is also involved in terminating the synthesis of non-coding Pol II transcripts, such as enhancer RNAs (eRNAs), small nuclear RNAs (snRNAs), telomerase RNAs and long non-coding RNAs (lncRNAs). Mediates recruitment of cytoplasmic dynein to the nuclear envelope, probably as component of the integrator complex. The chain is Integrator complex subunit 12 from Homo sapiens (Human).